A 614-amino-acid polypeptide reads, in one-letter code: Threonine--tRNA ligase (614 aa).

Positions 1-138 are editing domain; it reads MRILTIHARK…PLSELSKTIR (138 aa). Catalytic stretches follow at residues 195–492 and 196–492; these read NRVN…PYIP and RVND…PYIP. C289, H340, and H461 together coordinate Zn(2+).

This sequence belongs to the class-II aminoacyl-tRNA synthetase family. As to quaternary structure, homodimer. The cofactor is Zn(2+).

The protein localises to the cytoplasm. It carries out the reaction tRNA(Thr) + L-threonine + ATP = L-threonyl-tRNA(Thr) + AMP + diphosphate + H(+). In terms of biological role, catalyzes the attachment of threonine to tRNA(Thr) in a two-step reaction: L-threonine is first activated by ATP to form Thr-AMP and then transferred to the acceptor end of tRNA(Thr). Also edits incorrectly charged L-seryl-tRNA(Thr). This chain is Threonine--tRNA ligase, found in Staphylothermus marinus (strain ATCC 43588 / DSM 3639 / JCM 9404 / F1).